The sequence spans 404 residues: Probable tRNA sulfurtransferase (404 aa).

The THUMP domain maps to 60–165 (TAVAESLKQV…EEAAYLSYET (106 aa)). Residues 183–184 (ML), 208–209 (HF), arginine 265, glycine 287, and glutamine 296 each bind ATP.

It belongs to the ThiI family.

The protein localises to the cytoplasm. It carries out the reaction [ThiI sulfur-carrier protein]-S-sulfanyl-L-cysteine + a uridine in tRNA + 2 reduced [2Fe-2S]-[ferredoxin] + ATP + H(+) = [ThiI sulfur-carrier protein]-L-cysteine + a 4-thiouridine in tRNA + 2 oxidized [2Fe-2S]-[ferredoxin] + AMP + diphosphate. It catalyses the reaction [ThiS sulfur-carrier protein]-C-terminal Gly-Gly-AMP + S-sulfanyl-L-cysteinyl-[cysteine desulfurase] + AH2 = [ThiS sulfur-carrier protein]-C-terminal-Gly-aminoethanethioate + L-cysteinyl-[cysteine desulfurase] + A + AMP + 2 H(+). It participates in cofactor biosynthesis; thiamine diphosphate biosynthesis. Catalyzes the ATP-dependent transfer of a sulfur to tRNA to produce 4-thiouridine in position 8 of tRNAs, which functions as a near-UV photosensor. Also catalyzes the transfer of sulfur to the sulfur carrier protein ThiS, forming ThiS-thiocarboxylate. This is a step in the synthesis of thiazole, in the thiamine biosynthesis pathway. The sulfur is donated as persulfide by IscS. In Streptococcus pneumoniae (strain 70585), this protein is Probable tRNA sulfurtransferase.